A 309-amino-acid polypeptide reads, in one-letter code: Porphobilinogen deaminase (309 aa).

Cysteine 241 is subject to S-(dipyrrolylmethanemethyl)cysteine.

This sequence belongs to the HMBS family. As to quaternary structure, monomer. Dipyrromethane serves as cofactor.

The catalysed reaction is 4 porphobilinogen + H2O = hydroxymethylbilane + 4 NH4(+). Its pathway is porphyrin-containing compound metabolism; protoporphyrin-IX biosynthesis; coproporphyrinogen-III from 5-aminolevulinate: step 2/4. In terms of biological role, tetrapolymerization of the monopyrrole PBG into the hydroxymethylbilane pre-uroporphyrinogen in several discrete steps. This Bacillus thuringiensis subsp. konkukian (strain 97-27) protein is Porphobilinogen deaminase.